The primary structure comprises 350 residues: MVMFMHLMELPREVLLGEDLKDKVSQVAKRLKLGENVLILYGPKTKEIAGKDIEKHLKEFFHVKNLLIKEASMKNVQKALEIIRNENIDWLLGVGGGSIIDVAKLASFKADVPFISFPTTASHDGIASANASIRDLGAKTSIKARPPVAVIADVNIIKTAPYRYLAAGVGDMVSNLTAVKDWELAHRIRGEYFSEYAASLSLMSAKMVIKNADIIRLSNEESVRKVIKALISSGVAMSIAGSSRPASGAEHLFSHALDAIAPKPALHGEQCGVGTIIMAYLHGLNWKKIRETLKRVGAPTNAYELEIDPGFIIEALTIAHTIRPERYTILGKDGLTKEAAEKAAKITGVI.

NAD(+)-binding positions include 97–101 and 119–122; these read GSIID and TTAS. A substrate-binding site is contributed by aspartate 124. NAD(+) is bound at residue serine 128. Residue aspartate 171 coordinates substrate. Zn(2+) contacts are provided by aspartate 171 and histidine 251. Histidine 255 is a binding site for substrate. Residue histidine 267 coordinates Zn(2+).

The protein belongs to the glycerol-1-phosphate dehydrogenase family. Zn(2+) serves as cofactor.

It localises to the cytoplasm. The enzyme catalyses sn-glycerol 1-phosphate + NAD(+) = dihydroxyacetone phosphate + NADH + H(+). It catalyses the reaction sn-glycerol 1-phosphate + NADP(+) = dihydroxyacetone phosphate + NADPH + H(+). The protein operates within membrane lipid metabolism; glycerophospholipid metabolism. Catalyzes the NAD(P)H-dependent reduction of dihydroxyacetonephosphate (DHAP or glycerone phosphate) to glycerol 1-phosphate (G1P). The G1P thus generated is used as the glycerophosphate backbone of phospholipids in the cellular membranes of Archaea. The sequence is that of Glycerol-1-phosphate dehydrogenase [NAD(P)+] from Thermococcus sibiricus (strain DSM 12597 / MM 739).